A 468-amino-acid polypeptide reads, in one-letter code: V-type proton ATPase subunit S1 (468 aa).

The N-terminal stretch at 1-35 (MMAATAAAQVRAGTRWAPALCRMPWLPLMLVAAAA) is a signal peptide. Residues 36–228 (ATSEQQVPLV…TAVRPSRVAR (193 aa)) constitute a propeptide that is removed on maturation. The Lumenal segment spans residues 36 to 417 (ATSEQQVPLV…KKFSYASDCA (382 aa)). Asn167, Asn258, Asn271, Asn294, Asn301, Asn348, Asn355, and Asn404 each carry an N-linked (GlcNAc...) asparagine glycan. Cys369 and Cys416 are disulfide-bonded. Residues 418–438 (GFFSPGIWMGLLTSLFMLFIF) traverse the membrane as a helical segment. At 439 to 468 (TYGLHMILSLKTMDRFDDHKGPTITLTQIV) the chain is on the cytoplasmic side.

The protein belongs to the vacuolar ATPase subunit S1 family. Accessory component of the multisubunit proton-transporting vacuolar (V)-ATPase protein pump. Interacts (via N-terminus) with ATP6AP2 (via N-terminus). Interacts with RNASEK. Interacts with TMEM106B (via C-terminus). Post-translationally, N-glycosylated.

The protein resides in the endoplasmic reticulum membrane. The protein localises to the endoplasmic reticulum-Golgi intermediate compartment membrane. It localises to the cytoplasmic vesicle. Its subcellular location is the secretory vesicle. It is found in the synaptic vesicle membrane. The protein resides in the clathrin-coated vesicle membrane. Its function is as follows. Accessory subunit of the proton-transporting vacuolar (V)-ATPase protein pump, which is required for luminal acidification of secretory vesicles. Guides the V-type ATPase into specialized subcellular compartments, such as neuroendocrine regulated secretory vesicles or the ruffled border of the osteoclast, thereby regulating its activity. Involved in membrane trafficking and Ca(2+)-dependent membrane fusion. May play a role in the assembly of the V-type ATPase complex. In aerobic conditions, involved in intracellular iron homeostasis, thus triggering the activity of Fe(2+) prolyl hydroxylase (PHD) enzymes, and leading to HIF1A hydroxylation and subsequent proteasomal degradation. In islets of Langerhans cells, may regulate the acidification of dense-core secretory granules. This is V-type proton ATPase subunit S1 (ATP6AP1) from Bos taurus (Bovine).